The chain runs to 394 residues: MLWVIGINHKVEVDIRQKFSLTKTKLQEKLISLKKLADEVIILSTCNRTEIYFFSEEYVDIEKIFTELDWDRRYMPLFYIYKDKDCIKHLFEVVCGFDSLLIGEEQIVAQVKEAKDIAKQVGGKNPVLERLFEVALKCSKEFRTKARLNEHPITIASVVGKVLKESNIRKIAIIGLGNIGFLFCNYFKNSDVDKVFLIGRKNERIDQFVKLYPGKFEYSDKKDAISEAQCLICSTSAPHAVVHKDDIPDGKNLLIFDLAVPRDVDVEVYKLPNVKVIDIDQVHKMDATSREIRISKMQENYNIIEKYIDEFIEWLGFRQYRNLIIEVKRHAEQLCKAQVKYLKNVDSREREEVERLLIRMANLYIDRAIEVLREAHKEGSGEICSNLIKRIFLK.

Substrate is bound by residues 45-48 (TCNR), serine 99, 104-106 (EEQ), and glutamine 110. Cysteine 46 acts as the Nucleophile in catalysis. Position 175 to 180 (175 to 180 (GLGNIG)) interacts with NADP(+).

This sequence belongs to the glutamyl-tRNA reductase family. As to quaternary structure, homodimer.

The enzyme catalyses (S)-4-amino-5-oxopentanoate + tRNA(Glu) + NADP(+) = L-glutamyl-tRNA(Glu) + NADPH + H(+). The protein operates within porphyrin-containing compound metabolism; protoporphyrin-IX biosynthesis; 5-aminolevulinate from L-glutamyl-tRNA(Glu): step 1/2. Its function is as follows. Catalyzes the NADPH-dependent reduction of glutamyl-tRNA(Glu) to glutamate 1-semialdehyde (GSA). This chain is Glutamyl-tRNA reductase, found in Caldicellulosiruptor saccharolyticus (strain ATCC 43494 / DSM 8903 / Tp8T 6331).